Here is an 89-residue protein sequence, read N- to C-terminus: Elongation factor 1-beta (89 aa).

It belongs to the EF-1-beta/EF-1-delta family.

Its function is as follows. Promotes the exchange of GDP for GTP in EF-1-alpha/GDP, thus allowing the regeneration of EF-1-alpha/GTP that could then be used to form the ternary complex EF-1-alpha/GTP/AAtRNA. In Methanococcus maripaludis (strain C6 / ATCC BAA-1332), this protein is Elongation factor 1-beta.